We begin with the raw amino-acid sequence, 743 residues long: Tegument protein UL46 homolog (743 aa).

3 disordered regions span residues 437 to 481 (GCPP…VSSA), 522 to 590 (HQRS…SGYM), and 693 to 743 (RVRL…VSSL). The segment covering 526–552 (DSSSSDNSSCSSTETEYITISSTPSPT) has biased composition (low complexity). Polar residues-rich tracts occupy residues 573–586 (QPAN…SPAN) and 697–716 (GTTT…TPSS). The span at 722–743 (RTLSTSESPESSPEQQERVSSL) shows a compositional bias: low complexity.

This sequence belongs to the herpesviridae HHV-1 VP11/12 protein family. As to quaternary structure, interacts with VP16.

It localises to the virion tegument. Its subcellular location is the host cell membrane. Functionally, abundant tegument protein. Trans-activates the immediate early genes. This is Tegument protein UL46 homolog from Equus caballus (Horse).